A 623-amino-acid chain; its full sequence is Peptidoglycan D,D-transpeptidase MrdA (623 aa).

Residues 17–37 (VIVAFGVVVVCFGILIFNLYN) traverse the membrane as a helical segment. Ser-326 serves as the catalytic Acyl-ester intermediate.

Belongs to the transpeptidase family. MrdA subfamily.

It localises to the cell inner membrane. It carries out the reaction Preferential cleavage: (Ac)2-L-Lys-D-Ala-|-D-Ala. Also transpeptidation of peptidyl-alanyl moieties that are N-acyl substituents of D-alanine.. It functions in the pathway cell wall biogenesis; peptidoglycan biosynthesis. Functionally, catalyzes cross-linking of the peptidoglycan cell wall. This chain is Peptidoglycan D,D-transpeptidase MrdA, found in Salmonella typhimurium (strain SL1344).